Here is a 49-residue protein sequence, read N- to C-terminus: Large ribosomal subunit protein bL33A (49 aa).

The protein belongs to the bacterial ribosomal protein bL33 family.

The protein is Large ribosomal subunit protein bL33A of Geobacillus thermodenitrificans (strain NG80-2).